The following is an 896-amino-acid chain: Zinc finger protein 574 (896 aa).

3 C2H2-type zinc fingers span residues 16 to 38 (YVCSECNQLYGSLEEVLMHQNSH), 76 to 98 (YQCLECGQLLMSPSQLLEHQELH), and 126 to 148 (YECVDCKALFASQELWLNHRQTH). S164 is modified (phosphoserine). The C2H2-type 4 zinc finger occupies 214 to 236 (YKCSECSQLFQLPADFLEHQATH). Positions 259-272 (VEVPVSQPEPVPSS) are enriched in low complexity. Residues 259-303 (VEVPVSQPEPVPSSDHSYELRNGEALGRDRRGRRARRNNSGEPGG) are disordered. Basic and acidic residues predominate over residues 274 to 287 (HSYELRNGEALGRD). Residue S298 is modified to Phosphoserine. C2H2-type zinc fingers lie at residues 309–331 (LFCSACDQLFLSPHQLQQHLRSH), 336–358 (FKCPLCSRVFPSPSSLDQHLGDH), 364–386 (FLCVDCGLAFGTEALLLAHRRAH), and 392–413 (HSCPCGKTFVNLTKFLYHRRTH). The interval 434–460 (FPEPAPAETGEPEAPEPPVAEESSAEP) is disordered. C2H2-type zinc fingers lie at residues 466-489 (YRCLLCSREFGKALQLTRHQRFVH), 495-517 (HKCSICGKMFKKKSHVRNHLRTH), 523-545 (FPCPDCSKPFNSPANLARHRLTH), 551-573 (YRCGDCGKAFTQSSTLRQHRLVH), 579-601 (YRCQECGVRFHRPYRLLMHRYHH), and 607-630 (YKCRECPRSFLLRRLLEVHQLVAH). The segment at 636–659 (HRCSSCGAAFPSSLRLREHRCAAA) adopts a C2H2-type 15; degenerate zinc-finger fold. The segment at 667–689 (FECGTCGKKVGSAARLQAHEAAH) adopts a C2H2-type 16 zinc-finger fold. The tract at residues 687–733 (AAHAAAGPGEVLAKEPPAPRAPRAARTPITSPTTLGSAAPAAPAAPA) is disordered. Residues 707 to 732 (APRAARTPITSPTTLGSAAPAAPAAP) are compositionally biased toward low complexity. A Phosphoserine modification is found at S717. 4 consecutive C2H2-type zinc fingers follow at residues 738 to 760 (LECSECKKLFSTETSLQVHRRIH), 766 to 788 (YPCPDCGKAFRQSTHLKDHRRLH), 794 to 816 (FACEVCGKAFAISMRLAEHRRIH), and 822 to 844 (YSCPDCGKSYRSFSNLWKHRKTH). R832 is modified (asymmetric dimethylarginine).

This sequence belongs to the krueppel C2H2-type zinc-finger protein family.

The protein localises to the nucleus. In terms of biological role, may be involved in transcriptional regulation. The sequence is that of Zinc finger protein 574 (ZNF574) from Bos taurus (Bovine).